The chain runs to 312 residues: MRNHTTVANFILLGLTDDPQLQVIIFLLLFFTYMLSITGNLTIITLTLLDLHLKTPMYFFLRNFSFLEVSFTTVYIPKFLVSMATGDKTISYNDCAAQLFFTILLGATEFFLLAAMSYERYVAICKPLHYTTIMSSRVCSLLVFASWMAGFLIIFPPLLMGLQLDFCAANTVDHFFCDVSPILQLSCTDTDIIELMMLLSAILTLLVTLVLVILSYTNIIRTILKIPSSQQRKKAFSTCSSHMVVVSISYGSCIFMYVKPSAKERVSLNKGIALLSTSVAPMLNPFIYTLRNKQVKDVFKHTVKKIELFSMK.

The Extracellular segment spans residues 1 to 23 (MRNHTTVANFILLGLTDDPQLQV). The N-linked (GlcNAc...) asparagine glycan is linked to Asn-3. A helical membrane pass occupies residues 24 to 44 (IIFLLLFFTYMLSITGNLTII). Residues 45-63 (TLTLLDLHLKTPMYFFLRN) lie on the Cytoplasmic side of the membrane. Residues 64–84 (FSFLEVSFTTVYIPKFLVSMA) form a helical membrane-spanning segment. Topologically, residues 85-95 (TGDKTISYNDC) are extracellular. A disulfide bond links Cys-95 and Cys-177. Residues 96–116 (AAQLFFTILLGATEFFLLAAM) traverse the membrane as a helical segment. The Cytoplasmic segment spans residues 117-140 (SYERYVAICKPLHYTTIMSSRVCS). A helical membrane pass occupies residues 141–161 (LLVFASWMAGFLIIFPPLLMG). Over 162–194 (LQLDFCAANTVDHFFCDVSPILQLSCTDTDIIE) the chain is Extracellular. The helical transmembrane segment at 195 to 215 (LMMLLSAILTLLVTLVLVILS) threads the bilayer. Residues 216–237 (YTNIIRTILKIPSSQQRKKAFS) lie on the Cytoplasmic side of the membrane. The helical transmembrane segment at 238–258 (TCSSHMVVVSISYGSCIFMYV) threads the bilayer. Residues 259–269 (KPSAKERVSLN) lie on the Extracellular side of the membrane. Residues 270–290 (KGIALLSTSVAPMLNPFIYTL) form a helical membrane-spanning segment. Residues 291–312 (RNKQVKDVFKHTVKKIELFSMK) are Cytoplasmic-facing.

It belongs to the G-protein coupled receptor 1 family.

The protein localises to the cell membrane. Its function is as follows. Odorant receptor. The chain is Olfactory receptor 6C74 (OR6C74) from Homo sapiens (Human).